Here is a 701-residue protein sequence, read N- to C-terminus: Peptide transporter 3 (701 aa).

9 helical membrane passes run 29–49 (FSFY…HEFS), 55–75 (FIYH…SIMA), 91–111 (IYVV…SYPI), 119–139 (GLFV…AFAA), 154–174 (FSFF…ITPI), 188–208 (FPLA…LFLM), 269–289 (GLLN…LFDQ), 318–338 (INPV…YPAL), and 351–371 (AVGG…QLKV). N-linked (GlcNAc...) asparagine glycosylation is found at Asn-391 and Asn-432. The next 3 membrane-spanning stretches (helical) occupy residues 575-595 (ILWS…LSVT), 611-631 (VLTA…MMIS), and 641-661 (LEFF…ILLA).

Belongs to the major facilitator superfamily. Proton-dependent oligopeptide transporter (POT/PTR) (TC 2.A.17) family. As to expression, expressed in the AVA interneuron.

The protein resides in the membrane. Neuron-specific, H(+)-coupled oligopeptide transporter with broad specificity towards di- and tripeptides in a Na(+) and Cl(-)-independent manner. Shows H(+) channel activity in the absence of peptide substrates. The polypeptide is Peptide transporter 3 (pept-3) (Caenorhabditis elegans).